The sequence spans 133 residues: UPF0292 protein TK1411 (133 aa).

A Toprim domain is found at 20–100 (EGALIVEGLR…SVDIETWKEL (81 aa)). Mg(2+)-binding residues include glutamate 26, aspartate 69, and aspartate 71.

It belongs to the UPF0292 family. The cofactor is Mg(2+).

This is UPF0292 protein TK1411 from Thermococcus kodakarensis (strain ATCC BAA-918 / JCM 12380 / KOD1) (Pyrococcus kodakaraensis (strain KOD1)).